The following is a 275-amino-acid chain: NH(3)-dependent NAD(+) synthetase (275 aa).

46-53 (GISGGQDS) is an ATP binding site. D52 provides a ligand contact to Mg(2+). R140 contributes to the deamido-NAD(+) binding site. T160 contacts ATP. E165 contacts Mg(2+). Deamido-NAD(+) contacts are provided by K173 and D180. Positions 189 and 211 each coordinate ATP. 260–261 (HK) serves as a coordination point for deamido-NAD(+).

Belongs to the NAD synthetase family. As to quaternary structure, homodimer.

The enzyme catalyses deamido-NAD(+) + NH4(+) + ATP = AMP + diphosphate + NAD(+) + H(+). Its pathway is cofactor biosynthesis; NAD(+) biosynthesis; NAD(+) from deamido-NAD(+) (ammonia route): step 1/1. Its function is as follows. Catalyzes the ATP-dependent amidation of deamido-NAD to form NAD. Uses ammonia as a nitrogen source. This chain is NH(3)-dependent NAD(+) synthetase, found in Escherichia coli O157:H7.